Reading from the N-terminus, the 741-residue chain is Moderate conductance mechanosensitive channel YbiO (741 aa).

The first 18 residues, 1 to 18, serve as a signal peptide directing secretion; sequence MRWILFILFCLLGAPAHA. The disordered stretch occupies residues 22–42; sequence PGVTTTTTTDSTTEPAPEPDI. Positions 25 to 34 are enriched in low complexity; the sequence is TTTTTTDSTT. Helical transmembrane passes span 143–163, 185–205, 225–245, 268–288, 294–314, 343–363, 372–392, 432–452, 466–486, 509–529, and 533–553; these read MLAVLVFGFYWLIRLCALPLY, AMIIGAFIIDLLLLALTLFVG, LFLNAFALIEFFKAVLRLIFC, LSWLSSLIGYGLIVAVPIISN, IGALANVIIMLCMTVWALYLI, FALVWHWLASAYFIVLFFFSL, FMMGATVRSLAIIGIAAFVSG, ILTVCVAVMLLLSAWGLFDFW, ILIRIALILFFSAVGWTVLAS, LLTLFRNALAVIISTITIMIV, and IGVNIAPLLAGAGALGLAISF.

This sequence belongs to the MscS (TC 1.A.23) family. In terms of assembly, homoheptamer.

It is found in the cell inner membrane. Mechanosensitive channel that protects cells against hypoosmotic stress when highly overexpressed. The protein is Moderate conductance mechanosensitive channel YbiO (ybiO) of Escherichia coli (strain K12).